The sequence spans 133 residues: Crossover junction endodeoxyribonuclease Hjc (133 aa).

Glutamate 12 provides a ligand contact to Mg(2+). Residue serine 32 is part of the active site. Mg(2+) contacts are provided by aspartate 36 and glutamate 49.

The protein belongs to the Holliday junction resolvase Hjc family. Homodimer. Mg(2+) is required as a cofactor.

It catalyses the reaction Endonucleolytic cleavage at a junction such as a reciprocal single-stranded crossover between two homologous DNA duplexes (Holliday junction).. A structure-specific endonuclease that resolves Holliday junction (HJ) intermediates during genetic recombination. Cleaves 4-way DNA junctions introducing paired nicks in opposing strands, leaving a 5'-terminal phosphate and a 3'-terminal hydroxyl group that are subsequently ligated to produce recombinant products. In Methanocaldococcus jannaschii (strain ATCC 43067 / DSM 2661 / JAL-1 / JCM 10045 / NBRC 100440) (Methanococcus jannaschii), this protein is Crossover junction endodeoxyribonuclease Hjc.